An 84-amino-acid polypeptide reads, in one-letter code: Kunitz-type neurotoxin MitTx-alpha (84 aa).

A signal peptide spans M1–S24. The residue at position 25 (Q25) is a Pyrrolidone carboxylic acid. In terms of domain architecture, BPTI/Kunitz inhibitor spans C31–C82. Intrachain disulfides connect C31–C82, C41–C65, and C57–C78.

It belongs to the venom Kunitz-type family. Heterodimer of an alpha (Kunitz-type) and a beta (phospholipase A2 homolog) chains; non-covalently-linked. As to expression, expressed by the venom gland.

It is found in the secreted. Its function is as follows. MitTx, a heteromeric complex between Kunitz- and phospholipase-A2-like proteins, potently, persistently and selectively activates rat and chicken acid-sensing ion channel ASIC1. Both alternatively spliced rat isoforms ASIC1a and ASIC1b are activated, with a higher potency for ASIC1a (EC(50)=9.4 nM) vs ASIC1b (EC(50)=23 nM). The rat ASIC3 subtype is also sensitive to the heterodimer, but with a lower potency (EC(50)=830 nM). On rat ASIC2a, the toxin shows a very weak activation, but produces a remarkable potentiation (&gt;100-fold) of protons when the extracellular pH drops below neutrality. Moderate and weak activations are also observed on the heterotrimers Asic1a-Asic2a and Asic1a-Asic3 (expressed in CHO cells), respectively. The binding sites of the beta subunit of MitTx and the spider psalmotoxin-1 overlap, explaining why these toxins are mutually exclusive. In vivo, the heterodimer elicits robust pain-related behavior in mice by activation of ASIC1 channels on capsaicin-sensitive nerve fibers. This Micrurus tener tener (Texas coral snake) protein is Kunitz-type neurotoxin MitTx-alpha.